Here is a 375-residue protein sequence, read N- to C-terminus: Histidine biosynthesis bifunctional protein HisB (375 aa).

Positions 1 to 168 (MTPILFVDRD…GIAHELADAP (168 aa)) are histidinol-phosphatase. Asp-8 functions as the Nucleophile in the catalytic mechanism. Residues Asp-8, Asp-10, and Asp-128 each contribute to the Mg(2+) site. Asp-10 functions as the Proton donor in the catalytic mechanism. The interval 169–375 (RRALVQRNTK…TALPTTKGTL (207 aa)) is imidazoleglycerol-phosphate dehydratase.

It in the N-terminal section; belongs to the histidinol-phosphatase family. In the C-terminal section; belongs to the imidazoleglycerol-phosphate dehydratase family. The cofactor is Mg(2+).

Its subcellular location is the cytoplasm. The catalysed reaction is D-erythro-1-(imidazol-4-yl)glycerol 3-phosphate = 3-(imidazol-4-yl)-2-oxopropyl phosphate + H2O. It carries out the reaction L-histidinol phosphate + H2O = L-histidinol + phosphate. The protein operates within amino-acid biosynthesis; L-histidine biosynthesis; L-histidine from 5-phospho-alpha-D-ribose 1-diphosphate: step 6/9. It participates in amino-acid biosynthesis; L-histidine biosynthesis; L-histidine from 5-phospho-alpha-D-ribose 1-diphosphate: step 8/9. The polypeptide is Histidine biosynthesis bifunctional protein HisB (Xanthomonas axonopodis pv. citri (strain 306)).